A 913-amino-acid chain; its full sequence is MNSTGSNYSLKHNNTQDNNHNSEESVTNKTGELDKPGVKDGQALSKEEKLKRRQEQLAAWMQKRQQENQEPSGKVTISATDETNIDKEKLIRQQRIEEWKRKRLQKSEGLETDRSKIKTFEVKSSNEPTIKINASMKKTITPANGRSKKRPIFGDEDEDDEKESKPKFKKPTLDLAEIEEKKPEKSIDTEIDELDKYLSLLEEKEQGVENKKIENHDDDGIANGPGVGNVNESDDEEIDEDQKQQDILSSKLNRLQNKQKQLDDVDHNQIQYHPFRKDFYTEPTEISKLPEEEVANLRLKLDGIKVRGVNCTRPIIRWSQLGLPSTIMSIIEGRLNYSSPSSIQAQAIPAIMSGRDIIGVAKTGSGKTLSFVLPLLRHIQDQPPLKKGDGPIGLIMTPTRELALQIHKELNHFTKKLNISSCCCFGGSSIESQIAELKKGAQIIVGTPGRIIDLLAANSGRVTNLQRVTYLVLDEADRMFDMGFEPQVTKVFTRVRPDRQTVLFSATFPRKMELLAKKILDNPMEIVVGGISVVASEITQKVELFENEDDKSLEEAKFSKLLSTLNDYGDKDAECKILIFVEKQIAADELLVKLLTEKYPCLAIHGGKDQIDRKHAIREFSSSNSGVNILIATSIAARGLDVKGLNLVINYEAASHMEDYVHRVGRTGRAGRKGTAITFVSSKQGRAITDLVKAMRLSKVSEDEINPRLIEISTKFLEGVKSGKEKYNFGFSGKGLDNLQEIRESNRDLERKVYGEENDSSTFKANEKKQNKTDIHQSDLDVKLPDFHIIEGRAPETAGPDKCKFHSRITINDLPQKARWITVNRDSLSKVIESTGTSITNKGNYYPPNSKIPKTIKQNGKEVTPPPKLYLLVEGLTEKAVHDAIILLREKMIEGLEVAAKEESMGPTGKYTV.

The segment covering 1–30 has biased composition (polar residues); sequence MNSTGSNYSLKHNNTQDNNHNSEESVTNKT. Disordered stretches follow at residues 1–189 and 209–244; these read MNST…SIDT and ENKK…DQKQ. Residues 45–55 show a composition bias toward basic and acidic residues; that stretch reads SKEEKLKRRQE. Positions 68–82 are enriched in polar residues; sequence NQEPSGKVTISATDE. Basic and acidic residues-rich tracts occupy residues 84–121, 178–188, and 209–219; these read NIDK…KTFE, IEEKKPEKSID, and ENKKIENHDDD. The stretch at 192–265 forms a coiled coil; sequence DELDKYLSLL…QNKQKQLDDV (74 aa). Residues 316-345 carry the Q motif motif; sequence IRWSQLGLPSTIMSIIEGRLNYSSPSSIQA. The Helicase ATP-binding domain occupies 348–526; sequence IPAIMSGRDI…KKILDNPMEI (179 aa). 361 to 368 contacts ATP; the sequence is AKTGSGKT. Residues 474-477 carry the DEAD box motif; the sequence is DEAD. The 150-residue stretch at 564-713 folds into the Helicase C-terminal domain; the sequence is TLNDYGDKDA…EINPRLIEIS (150 aa). The segment at 755–774 is disordered; that stretch reads GEENDSSTFKANEKKQNKTD. Positions 765–774 are enriched in basic and acidic residues; the sequence is ANEKKQNKTD.

Belongs to the DEAD box helicase family. DDX46/PRP5 subfamily.

The protein resides in the nucleus. It catalyses the reaction ATP + H2O = ADP + phosphate + H(+). In terms of biological role, ATP-dependent RNA helicase involved spliceosome assembly and in nuclear splicing. Catalyzes an ATP-dependent conformational change of U2 snRNP. Bridges U1 and U2 snRNPs and enables stable U2 snRNP association with intron RNA. The protein is Pre-mRNA-processing ATP-dependent RNA helicase PRP5 (PRP5) of Debaryomyces hansenii (strain ATCC 36239 / CBS 767 / BCRC 21394 / JCM 1990 / NBRC 0083 / IGC 2968) (Yeast).